Consider the following 491-residue polypeptide: UDP-N-acetylmuramoyl-L-alanyl-D-glutamate--2,6-diaminopimelate ligase (491 aa).

Ser-30 lines the UDP-N-acetyl-alpha-D-muramoyl-L-alanyl-D-glutamate pocket. 108–114 lines the ATP pocket; sequence GTNGKTT. Residues Asn-149, 150 to 151, Ser-177, Gln-183, and Arg-185 contribute to the UDP-N-acetyl-alpha-D-muramoyl-L-alanyl-D-glutamate site; that span reads TT. N6-carboxylysine is present on Lys-217. Meso-2,6-diaminopimelate contacts are provided by residues Arg-383, 407–410, Gly-458, and Glu-462; that span reads DNPR. Positions 407-410 match the Meso-diaminopimelate recognition motif motif; sequence DNPR.

This sequence belongs to the MurCDEF family. MurE subfamily. Mg(2+) is required as a cofactor. Post-translationally, carboxylation is probably crucial for Mg(2+) binding and, consequently, for the gamma-phosphate positioning of ATP.

The protein resides in the cytoplasm. The catalysed reaction is UDP-N-acetyl-alpha-D-muramoyl-L-alanyl-D-glutamate + meso-2,6-diaminopimelate + ATP = UDP-N-acetyl-alpha-D-muramoyl-L-alanyl-gamma-D-glutamyl-meso-2,6-diaminopimelate + ADP + phosphate + H(+). Its pathway is cell wall biogenesis; peptidoglycan biosynthesis. Catalyzes the addition of meso-diaminopimelic acid to the nucleotide precursor UDP-N-acetylmuramoyl-L-alanyl-D-glutamate (UMAG) in the biosynthesis of bacterial cell-wall peptidoglycan. The protein is UDP-N-acetylmuramoyl-L-alanyl-D-glutamate--2,6-diaminopimelate ligase of Listeria monocytogenes serotype 4b (strain F2365).